The sequence spans 220 residues: 1-Cys peroxiredoxin B (220 aa).

The region spanning 4–165 is the Thioredoxin domain; the sequence is LTLGDVVPDL…VLRATDALLT (162 aa). Cysteine 46 acts as the Cysteine sulfenic acid (-SOH) intermediate in catalysis. The Bipartite nuclear localization signal motif lies at 195-218; the sequence is KARFPAGFETAQLPSNKCYLRFTQ.

The protein belongs to the peroxiredoxin family. Prx6 subfamily.

It localises to the nucleus. The protein localises to the cytoplasm. It carries out the reaction a hydroperoxide + [thioredoxin]-dithiol = an alcohol + [thioredoxin]-disulfide + H2O. Thiol-specific peroxidase that catalyzes the reduction of hydrogen peroxide and organic hydroperoxides to water and alcohols, respectively. Seems to contribute to the inhibition of germination during stress. The polypeptide is 1-Cys peroxiredoxin B (Oryza sativa subsp. indica (Rice)).